A 545-amino-acid chain; its full sequence is Lysine--tRNA ligase (545 aa).

Residues 41–49 carry the 'HIGH' region motif; the sequence is PSGVPHLGH. The 'KMSKS' region motif lies at 306–310; it reads ALSSS.

It belongs to the class-I aminoacyl-tRNA synthetase family.

Its subcellular location is the cytoplasm. The catalysed reaction is tRNA(Lys) + L-lysine + ATP = L-lysyl-tRNA(Lys) + AMP + diphosphate. In Natronomonas pharaonis (strain ATCC 35678 / DSM 2160 / CIP 103997 / JCM 8858 / NBRC 14720 / NCIMB 2260 / Gabara) (Halobacterium pharaonis), this protein is Lysine--tRNA ligase.